A 1626-amino-acid chain; its full sequence is Collagen alpha-1(XXII) chain (1626 aa).

A signal peptide spans 1-27; sequence MAGLRGNAVAGLLWMLLLWSGGGGCQA. A VWFA domain is found at 38 to 213; the sequence is DLVFLLDTSS…NAIDKIRGKL (176 aa). One can recognise a Laminin G-like domain in the interval 239-427; sequence GTKEITGFDL…LQRIVIYCDS (189 aa). An N-linked (GlcNAc...) asparagine glycan is attached at N375. 16 Collagen-like domains span residues 481-520, 526-565, 566-625, 657-708, 714-773, 774-833, 868-922, 925-984, 1047-1095, 1118-1155, 1156-1215, 1249-1308, 1315-1374, 1387-1446, 1495-1550, and 1575-1604; these read GEKG…GDVG, QGEK…PGEV, GMRG…PGPS, GEQG…GIPG, GPPG…PGER, GEDG…PGLK, GPKG…GAPG, GAPG…PGKG, AGPP…PGKP, PPGP…AGPP, GLPG…AGPP, GKPG…PGKD, GPQG…PGEK, GEPG…PGPP, SQGR…PGAP, and DGLP…PPGQ. Disordered regions lie at residues 506 to 1002, 1019 to 1103, 1119 to 1458, and 1491 to 1609; these read PVGA…GPLG, GGQC…LLSP, PGPP…RGES, and YMKS…DPSQ. Basic and acidic residues predominate over residues 544–553; the sequence is DGSKGMRGEP. Residues 571–580 are compositionally biased toward pro residues; sequence QGPPGLPGPP. A compositionally biased stretch (basic and acidic residues) spans 591-606; the sequence is ERGEKGTRGEKGERGL. Residues 661 to 670 are compositionally biased toward low complexity; that stretch reads APGPRGHQGA. Pro residues-rich tracts occupy residues 715-728 and 742-751; these read PPGP…PGPG and KPGPPGPTGP. Basic and acidic residues-rich tracts occupy residues 769-778 and 815-826; these read EPGERGEDGL and RGEKGDQGEKGE. Residues 908 to 939 show a composition bias toward low complexity; the sequence is AHGAPGAAGNPGAPGHVGAPGPSGPPGSVGAP. Residues 945-957 show a composition bias toward basic and acidic residues; sequence PGKDGERGEKGAA. Low complexity-rich tracts occupy residues 959 to 974 and 1056 to 1065; these read EEGS…DPGA and PGDKGSPGSR. Composition is skewed to basic and acidic residues over residues 1131–1151 and 1173–1185; these read KGDK…KKGE and RGAD…KGDQ. Low complexity predominate over residues 1205–1223; sequence ADGIAGAAGPPGIQGSPGK. Positions 1241–1250 are enriched in basic and acidic residues; it reads EEGKEGRDGK. Over residues 1260-1275 the composition is skewed to low complexity; sequence AGEPGLPGPEGARGPP. A compositionally biased stretch (low complexity) spans 1379 to 1389; the sequence is KEGVPGKPGEP. Residues 1391–1404 show a composition bias toward basic and acidic residues; sequence FKGERGDPGIKGDK. The segment covering 1405–1414 has biased composition (gly residues); the sequence is GPPGGKGQPG. A compositionally biased stretch (pro residues) spans 1440 to 1449; that stretch reads VGPPGPPGQP. Residues 1521–1530 show a composition bias toward gly residues; it reads GRPGQGGLEG. Positions 1595-1604 are enriched in pro residues; that stretch reads LPGPPGPPGQ.

It belongs to the fibril-associated collagens with interrupted helices (FACIT) family. As to expression, restrictive expression is observed at tissue junctions such as the myotendinous junction in skeletal and heart muscle, the articular cartilage-synovial fluid junction, or the border between the anagen hair follicle and the dermis in the skin. It is deposited in the basement membrane zone of the myotendinous junction and the hair follicle and associated with the extrafibrillar matrix in cartilage.

Its subcellular location is the secreted. It localises to the extracellular space. The protein localises to the extracellular matrix. The protein resides in the cytoplasm. Acts as a cell adhesion ligand for skin epithelial cells and fibroblasts. This Homo sapiens (Human) protein is Collagen alpha-1(XXII) chain (COL22A1).